A 350-amino-acid polypeptide reads, in one-letter code: Small ribosomal subunit biogenesis GTPase RsgA (350 aa).

Over residues Met-1–Asn-17 the composition is skewed to polar residues. Positions Met-1–Glu-27 are disordered. The region spanning Thr-104–Phe-273 is the CP-type G domain. Residues Asn-160 to Asp-163 and Gly-214 to Ser-222 contribute to the GTP site. Zn(2+) is bound by residues Cys-297, Cys-302, His-304, and Cys-310.

Belongs to the TRAFAC class YlqF/YawG GTPase family. RsgA subfamily. Monomer. Associates with 30S ribosomal subunit, binds 16S rRNA. It depends on Zn(2+) as a cofactor.

It is found in the cytoplasm. In terms of biological role, one of several proteins that assist in the late maturation steps of the functional core of the 30S ribosomal subunit. Helps release RbfA from mature subunits. May play a role in the assembly of ribosomal proteins into the subunit. Circularly permuted GTPase that catalyzes slow GTP hydrolysis, GTPase activity is stimulated by the 30S ribosomal subunit. In Salmonella agona (strain SL483), this protein is Small ribosomal subunit biogenesis GTPase RsgA.